Consider the following 258-residue polypeptide: Probable endonuclease LCL3 (258 aa).

Residues 12-34 (VLIEAGLLSLVLTGTTLATYRGY) traverse the membrane as a helical segment. Residues 55–245 (RWLYGKVTAV…KSKRIGMWSQ (191 aa)) form the TNase-like domain. The active site involves Arg136. Asp141 contributes to the Ca(2+) binding site. Catalysis depends on residues Glu144 and Arg184.

It belongs to the LCL3 family.

It is found in the mitochondrion. It localises to the membrane. The chain is Probable endonuclease LCL3 (LCL3) from Nakaseomyces delphensis (Yeast).